Consider the following 293-residue polypeptide: Cytidine deaminase (293 aa).

CMP/dCMP-type deaminase domains lie at Glu47 to Ala166 and Glu186 to Val293. Asn88–Glu90 contacts substrate. A Zn(2+)-binding site is contributed by His101. Residue Glu103 is the Proton donor of the active site. The Zn(2+) site is built by Cys128 and Cys131.

The protein belongs to the cytidine and deoxycytidylate deaminase family. As to quaternary structure, homodimer. Zn(2+) is required as a cofactor.

It carries out the reaction cytidine + H2O + H(+) = uridine + NH4(+). It catalyses the reaction 2'-deoxycytidine + H2O + H(+) = 2'-deoxyuridine + NH4(+). Functionally, this enzyme scavenges exogenous and endogenous cytidine and 2'-deoxycytidine for UMP synthesis. The polypeptide is Cytidine deaminase (Aeromonas salmonicida (strain A449)).